The following is a 229-amino-acid chain: MKAVILLSGGLDSSTILYQAKADGCECYSISFDYQQRHRRELHSAFLVAQTAGIVQHQVINFDLRLWGGSALTDDNIDLPQERSLDAMSQNIPVTYVPARNTIFLSFALAYAEAIAAQRVYIGVNALDYSGYPDCRPDYIEAMQEVFRLGTKQGREGQPINIVAPLINLKKTEIIQLGNQLGVPWNLTWSCYAGGDVACGVCDSCRLRLAAFAELGLEDPLPYAYLKGV.

Leucine 7–leucine 17 contributes to the ATP binding site. Residues cysteine 191, cysteine 199, cysteine 202, and cysteine 205 each coordinate Zn(2+).

It belongs to the QueC family. Requires Zn(2+) as cofactor.

It catalyses the reaction 7-carboxy-7-deazaguanine + NH4(+) + ATP = 7-cyano-7-deazaguanine + ADP + phosphate + H2O + H(+). It participates in purine metabolism; 7-cyano-7-deazaguanine biosynthesis. Its function is as follows. Catalyzes the ATP-dependent conversion of 7-carboxy-7-deazaguanine (CDG) to 7-cyano-7-deazaguanine (preQ(0)). The chain is 7-cyano-7-deazaguanine synthase from Nostoc sp. (strain PCC 7120 / SAG 25.82 / UTEX 2576).